Reading from the N-terminus, the 191-residue chain is Fe/S biogenesis protein NfuA (191 aa).

Positions 149 and 152 each coordinate [4Fe-4S] cluster.

Belongs to the NfuA family. Homodimer. [4Fe-4S] cluster serves as cofactor.

In terms of biological role, involved in iron-sulfur cluster biogenesis. Binds a 4Fe-4S cluster, can transfer this cluster to apoproteins, and thereby intervenes in the maturation of Fe/S proteins. Could also act as a scaffold/chaperone for damaged Fe/S proteins. In Serratia proteamaculans (strain 568), this protein is Fe/S biogenesis protein NfuA.